Here is a 213-residue protein sequence, read N- to C-terminus: Homeobox protein koza (213 aa).

The segment at 24–72 is disordered; sequence ILSHMGPGSKEKSLGFPKTDQDQDSSLRDTEEKYASEKLQSSSQPAEIH. The segment covering 32-59 has biased composition (basic and acidic residues); sequence SKEKSLGFPKTDQDQDSSLRDTEEKYAS. The segment at residues 102–161 is a DNA-binding region (homeobox); that stretch reads QKRSRAAFSHSQVIELERKFSSQKYLSAPERAQLAKSLKLTETQVKIWFQNRRYKTKRKQ.

This sequence belongs to the NK-3 homeobox family. In terms of tissue distribution, expressed in the muscle layer of embryonic somites. In tailbud embryos, expressed throughout the entire myotome but at the mid-tailbud stage (stage 32), expression becomes restricted to the outer periphery of the somite so that by the tadpole stage only the outer, type I cells show expression. Also expressed in the dorsal cement gland and in the myocardial layer of the developing heart. In all tissues, expression begins after terminal differentiation.

Its subcellular location is the nucleus. Functionally, may regulate cell proliferation in a tissue-specific manner. The polypeptide is Homeobox protein koza (Xenopus laevis (African clawed frog)).